A 277-amino-acid polypeptide reads, in one-letter code: Phosphonoacetaldehyde hydrolase (277 aa).

Asp-20 serves as the catalytic Nucleophile. The Mg(2+) site is built by Asp-20 and Ala-22. The active-site Schiff-base intermediate with substrate is the Lys-61. Asp-194 serves as a coordination point for Mg(2+).

The protein belongs to the HAD-like hydrolase superfamily. PhnX family. In terms of assembly, homodimer. Requires Mg(2+) as cofactor.

The catalysed reaction is phosphonoacetaldehyde + H2O = acetaldehyde + phosphate + H(+). Its function is as follows. Involved in phosphonate degradation. This chain is Phosphonoacetaldehyde hydrolase, found in Syntrophobacter fumaroxidans (strain DSM 10017 / MPOB).